We begin with the raw amino-acid sequence, 638 residues long: Replication protein E1 (638 aa).

The short motif at 84–86 (KRK) is the Nuclear localization signal element. A Phosphoserine; by host modification is found at S90. A compositionally biased stretch (polar residues) spans 90–119 (SQNSPLQDITNQHRQQSDSQQNTHQVNNSQ). The segment at 90–133 (SQNSPLQDITNQHRQQSDSQQNTHQVNNSQAKRRAVDSVPDSGY) is disordered. The tract at residues 176 to 342 (THVNSVTQIC…QTQLEHSFDD (167 aa)) is DNA-binding region. The region spanning 441–591 (VNFIYFLQVL…FPFDSNGNPV (151 aa)) is the SF3 helicase domain. 467 to 474 (GPPNTGKS) provides a ligand contact to ATP.

Belongs to the papillomaviridae E1 protein family. Can form hexamers. Interacts with E2 protein; this interaction increases E1 DNA binding specificity. Interacts with host DNA polymerase subunit POLA2. Interacts with host single stranded DNA-binding protein RPA1. Interacts with host TOP1; this interaction stimulates the enzymatic activity of TOP1. Post-translationally, phosphorylated.

The protein localises to the host nucleus. The enzyme catalyses Couples ATP hydrolysis with the unwinding of duplex DNA by translocating in the 3'-5' direction.. The catalysed reaction is ATP + H2O = ADP + phosphate + H(+). In terms of biological role, ATP-dependent DNA 3'-5' helicase required for initiation of viral DNA replication. It forms a complex with the viral E2 protein. The E1-E2 complex binds to the replication origin which contains binding sites for both proteins. During the initial step, a dimer of E1 interacts with a dimer of protein E2 leading to a complex that binds the viral origin of replication with high specificity. Then, a second dimer of E1 displaces the E2 dimer in an ATP-dependent manner to form the E1 tetramer. Following this, two E1 monomers are added to each half of the site, which results in the formation of two E1 trimers on the viral ori. Subsequently, two hexamers will be created. The double hexamer acts as a bi-directional helicase machinery and unwinds the viral DNA and then recruits the host DNA polymerase to start replication. The polypeptide is Replication protein E1 (Homo sapiens (Human)).